The sequence spans 295 residues: MPSLKDLRNRITSVKATQKITKAMQMVAAAKLRRAQNAAENGRPYAEKMASVLANLAGNLIGGVGAPRLLSGTGQDRVHLLVVCTGDRGLAGAFNSSIARLARDHANRLMAEGKTVKIMTVGKKGLDVLRRQFRDQIIASRDIRGNKPVDYPFAAEIADDILARFEAGEFDVATLFYSEFRSVISQIPTAQKIIPAELPQTDGAAKGAGSDAAMEFEPSEETILETLLPKNLTVQVFRALLENAASEQGARMSAMDSATRNAGEMIKKQTLIYNRTRQAMITKELIEIISGAEAL.

Belongs to the ATPase gamma chain family. In terms of assembly, F-type ATPases have 2 components, CF(1) - the catalytic core - and CF(0) - the membrane proton channel. CF(1) has five subunits: alpha(3), beta(3), gamma(1), delta(1), epsilon(1). CF(0) has three main subunits: a, b and c.

The protein resides in the cell inner membrane. In terms of biological role, produces ATP from ADP in the presence of a proton gradient across the membrane. The gamma chain is believed to be important in regulating ATPase activity and the flow of protons through the CF(0) complex. The sequence is that of ATP synthase gamma chain from Methylorubrum populi (strain ATCC BAA-705 / NCIMB 13946 / BJ001) (Methylobacterium populi).